The following is a 171-amino-acid chain: Protein TIFY 11d (171 aa).

Residues 65–100 (PSAGTAPLTIFYDGRMVVVDDVPAEKAAELMRLAGS) enclose the Tify domain. Residues 117-142 (PIARKASLQRFLQKRKHRITTTSEPY) carry the Jas motif. Positions 119–126 (ARKASLQR) match the Nuclear localization signal motif.

Belongs to the TIFY/JAZ family. Interacts with BHLH148 and COI1A. Interacts with COI1A, COI1B and COI2 in a coronatine-dependent manner. Coronatine is an analog of jasmonoyl isoleucine (JA-Ile). In terms of processing, ubiquitinated. Increase in jasmonoyl isoleucine (JA-Ile) levels mediates its degradation via COI1A-mediated proteasome pathway.

Its subcellular location is the nucleus. Functionally, repressor of jasmonate (JA) responses. May act on an initial response of JA-regulated gene expression toward drought tolerance as part of a BHLH148-TIFY11D/JAZ12-COI1A complex. This Oryza sativa subsp. indica (Rice) protein is Protein TIFY 11d.